Here is a 112-residue protein sequence, read N- to C-terminus: UPF0145 protein Acid_4599 (112 aa).

This sequence belongs to the UPF0145 family.

The sequence is that of UPF0145 protein Acid_4599 from Solibacter usitatus (strain Ellin6076).